Consider the following 848-residue polypeptide: Adenylate cyclase (848 aa).

The tract at residues 1–535 (MYLYIETLKQ…DISHHFPLRL (535 aa)) is catalytic. The tract at residues 541 to 848 (KALYSPCEIR…SQPAQQFQLH (308 aa)) is regulatory.

This sequence belongs to the adenylyl cyclase class-1 family.

It is found in the cytoplasm. The catalysed reaction is ATP = 3',5'-cyclic AMP + diphosphate. Its activity is regulated as follows. The regulatory domain is involved in the regulation of cyclase activity by the carbon source. The protein is Adenylate cyclase (cya) of Yersinia intermedia.